The chain runs to 271 residues: Tryptophan synthase alpha chain (271 aa).

Catalysis depends on proton acceptor residues glutamate 56 and aspartate 67.

It belongs to the TrpA family. As to quaternary structure, tetramer of two alpha and two beta chains.

The catalysed reaction is (1S,2R)-1-C-(indol-3-yl)glycerol 3-phosphate + L-serine = D-glyceraldehyde 3-phosphate + L-tryptophan + H2O. The protein operates within amino-acid biosynthesis; L-tryptophan biosynthesis; L-tryptophan from chorismate: step 5/5. In terms of biological role, the alpha subunit is responsible for the aldol cleavage of indoleglycerol phosphate to indole and glyceraldehyde 3-phosphate. The chain is Tryptophan synthase alpha chain from Mycobacterium intracellulare.